The sequence spans 239 residues: O-methyltransferase ankF (239 aa).

S-adenosyl-L-methionine contacts are provided by residues E71, 73 to 74 (GT), S79, E98, and A127.

It belongs to the class I-like SAM-binding methyltransferase superfamily. Cation-dependent O-methyltransferase family.

The enzyme catalyses NK13650 B + S-adenosyl-L-methionine = NK13650 D + S-adenosyl-L-homocysteine + H(+). Its pathway is secondary metabolite biosynthesis. Functionally, O-methyltransferase; part of the ank cluster that mediates the biosynthesis of NK13650 C, a highly modified cyclo-arginine-tyrosine dipeptide. AnkF converts NK13650 B to produce NK13650 D via methylation of the C-17 phenol group. Within the pathway, the cyclodipeptide synthase ankA acts as the scaffold-generating enzyme and is responsible for formation of the cyclo-Arg-Tyr diketopiperazine (cRY) from L-Arg and L-Tyr. The ankA product cRY is desaturated by the cytochrome P450 monooxygenase ankB to yield a dehydro-cyclodipeptide intermediate. The FAD-dependent monooxygenase ankC then installs the m-OH, ankD catalyzes the attachment of L-homoserine, and ankE ligates citrate to the ankD product to yield NK13650 B. The O-methyltransferase ankF is responsible for methylation of the C-17 phenol group of NK13650 B to produce NK13650 D. Amidation of NK13650 D with L-Asp by ankG then leads to the production of NK13650 C, whereas amidation of NK13650 B produces NK13650 A. In Aspergillus thermomutatus (Neosartorya pseudofischeri), this protein is O-methyltransferase ankF.